Reading from the N-terminus, the 391-residue chain is Polyketide synthase 1 (391 aa).

Residue Cys164 is part of the active site.

This sequence belongs to the thiolase-like superfamily. Chalcone/stilbene synthases family. In terms of assembly, homodimer. Expressed in fruits.

It carries out the reaction (E)-4-coumaroyl-CoA + 3 malonyl-CoA + 3 H(+) = 2',4,4',6'-tetrahydroxychalcone + 3 CO2 + 4 CoA. It participates in secondary metabolite biosynthesis; flavonoid biosynthesis. Its function is as follows. Polyketide synthase producing naringenin chalcone and slightly p-coumaryltriacetic acid lactone (CTAL). Can use p-coumaryl-CoA as substrate. This chain is Polyketide synthase 1 (PKS1), found in Rubus idaeus (Raspberry).